A 457-amino-acid polypeptide reads, in one-letter code: Argininosuccinate lyase (457 aa).

The protein belongs to the lyase 1 family. Argininosuccinate lyase subfamily.

It is found in the cytoplasm. It carries out the reaction 2-(N(omega)-L-arginino)succinate = fumarate + L-arginine. It functions in the pathway amino-acid biosynthesis; L-arginine biosynthesis; L-arginine from L-ornithine and carbamoyl phosphate: step 3/3. This Escherichia coli O1:K1 / APEC protein is Argininosuccinate lyase.